A 344-amino-acid chain; its full sequence is Dihydroorotase (344 aa).

Zn(2+) contacts are provided by His13 and His15. Substrate contacts are provided by residues 15–17 (HLR) and Asn41. Zn(2+)-binding residues include Lys99, His136, and His174. Lys99 bears the N6-carboxylysine mark. His136 is a substrate binding site. Leu219 is a binding site for substrate. Asp247 contacts Zn(2+). Residue Asp247 is part of the active site. The substrate site is built by His251 and Ala263.

It belongs to the metallo-dependent hydrolases superfamily. DHOase family. Class II DHOase subfamily. Homodimer. The cofactor is Zn(2+).

It catalyses the reaction (S)-dihydroorotate + H2O = N-carbamoyl-L-aspartate + H(+). It functions in the pathway pyrimidine metabolism; UMP biosynthesis via de novo pathway; (S)-dihydroorotate from bicarbonate: step 3/3. Functionally, catalyzes the reversible cyclization of carbamoyl aspartate to dihydroorotate. This chain is Dihydroorotase, found in Shewanella denitrificans (strain OS217 / ATCC BAA-1090 / DSM 15013).